The following is a 378-amino-acid chain: UPF0754 membrane protein BCE_0952 (378 aa).

2 consecutive transmembrane segments (helical) span residues 1–21 (MNIW…GGFT) and 357–377 (YLGA…LLFL).

The protein belongs to the UPF0754 family.

It is found in the cell membrane. The protein is UPF0754 membrane protein BCE_0952 of Bacillus cereus (strain ATCC 10987 / NRS 248).